A 161-amino-acid polypeptide reads, in one-letter code: NADH-quinone oxidoreductase subunit I (161 aa).

4Fe-4S ferredoxin-type domains are found at residues 52–82 and 92–121; these read LRRYPNGEERCIACKLCEAICPAMAITIESE and SRYDIDLTKCIFCGFCEEACPVDAVVETRV. Residues Cys62, Cys65, Cys68, Cys72, Cys101, Cys104, Cys107, and Cys111 each contribute to the [4Fe-4S] cluster site.

Belongs to the complex I 23 kDa subunit family. In terms of assembly, NDH-1 is composed of 14 different subunits. Subunits NuoA, H, J, K, L, M, N constitute the membrane sector of the complex. It depends on [4Fe-4S] cluster as a cofactor.

The protein localises to the cell inner membrane. It catalyses the reaction a quinone + NADH + 5 H(+)(in) = a quinol + NAD(+) + 4 H(+)(out). Its function is as follows. NDH-1 shuttles electrons from NADH, via FMN and iron-sulfur (Fe-S) centers, to quinones in the respiratory chain. The immediate electron acceptor for the enzyme in this species is believed to be ubiquinone. Couples the redox reaction to proton translocation (for every two electrons transferred, four hydrogen ions are translocated across the cytoplasmic membrane), and thus conserves the redox energy in a proton gradient. This Azoarcus sp. (strain BH72) protein is NADH-quinone oxidoreductase subunit I.